Reading from the N-terminus, the 194-residue chain is Fe/S biogenesis protein NfuA (194 aa).

Residues Cys152 and Cys155 each coordinate [4Fe-4S] cluster.

Belongs to the NfuA family. In terms of assembly, homodimer. [4Fe-4S] cluster is required as a cofactor.

In terms of biological role, involved in iron-sulfur cluster biogenesis. Binds a 4Fe-4S cluster, can transfer this cluster to apoproteins, and thereby intervenes in the maturation of Fe/S proteins. Could also act as a scaffold/chaperone for damaged Fe/S proteins. The protein is Fe/S biogenesis protein NfuA of Teredinibacter turnerae (strain ATCC 39867 / T7901).